Reading from the N-terminus, the 658-residue chain is Glycogen debranching enzyme (658 aa).

The active-site Nucleophile is the Asp-335. Glu-370 serves as the catalytic Proton donor.

It belongs to the glycosyl hydrolase 13 family.

The enzyme catalyses Hydrolysis of (1-&gt;6)-alpha-D-glucosidic linkages to branches with degrees of polymerization of three or four glucose residues in limit dextrin.. It participates in glycan degradation; glycogen degradation. In terms of biological role, removes maltotriose and maltotetraose chains that are attached by 1,6-alpha-linkage to the limit dextrin main chain, generating a debranched limit dextrin. In Erwinia tasmaniensis (strain DSM 17950 / CFBP 7177 / CIP 109463 / NCPPB 4357 / Et1/99), this protein is Glycogen debranching enzyme.